We begin with the raw amino-acid sequence, 368 residues long: DNA-directed RNA polymerase II subunit GRINL1A (368 aa).

Positions 29 to 68 (KRQERLLRNEKFICKLPDKGKKIFDSFAKLKAAIAECEEV) are important for transcription repressor activity. Polar residues-rich tracts occupy residues 116–131 (SSVD…QNQG), 205–224 (GEQQ…LSSG), and 258–273 (QNDS…SPIS). Disordered stretches follow at residues 116–186 (SSVD…DTSS), 203–227 (DQGE…GTEK), and 255–282 (PFRQ…RRDK). The interval 227–298 (KKPHYMEVLE…TAARLLPLHH (72 aa)) is interaction with Pol II. At Ser-270 the chain carries Phosphoserine. The tract at residues 299 to 314 (MPTQLLSIEESLALQK) is important for transcription repressor activity. Positions 301–335 (TQLLSIEESLALQKQQKQNYEEMQAKLAAQKLAER) form a coiled coil. The tract at residues 315 to 340 (QQKQNYEEMQAKLAAQKLAERLNIKM) is interaction with Pol II. The segment at 339-368 (KMRSYNPEGESSGRYREVRDEDDDWSSDEF) is disordered. Residues 358 to 368 (DEDDDWSSDEF) show a composition bias toward acidic residues.

It belongs to the GRINL1 family. In terms of assembly, component of the Pol II(G) complex, which contains the RNA polymerase II (Pol II) core complex subunits and POLR2M isoform 1. Pol II(G) appears to be an abundant form of Pol II. Post-translationally, dephosphorylated at Ser-270 by the PNUTS-PP1 complex, promoting RNA polymerase II transcription pause-release. Detected in adult an fetal brain. Detected in heart, kidney, skeletal muscle, small intestine, lung, prostate and testis.

It localises to the nucleus. Functionally, appears to be a stable component of the Pol II(G) complex form of RNA polymerase II (Pol II). Pol II synthesizes mRNA precursors and many functional non-coding RNAs and is the central component of the basal RNA polymerase II transcription machinery. May play a role in the Mediator complex-dependent regulation of transcription activation. Acts as a negative regulator of transcriptional activation; this repression is relieved by the Mediator complex, which restores Pol II(G) activator-dependent transcription to a level equivalent to that of Pol II. The polypeptide is DNA-directed RNA polymerase II subunit GRINL1A (POLR2M) (Homo sapiens (Human)).